The primary structure comprises 259 residues: uncharacterized protein (259 aa).

It belongs to the BtpA family.

This is an uncharacterized protein from Pyrococcus horikoshii (strain ATCC 700860 / DSM 12428 / JCM 9974 / NBRC 100139 / OT-3).